Here is a 146-residue protein sequence, read N- to C-terminus: Small ribosomal subunit protein uS5 (146 aa).

Positions 8-71 (FKEVVVNIGR…DDAFKNIIKV (64 aa)) constitute an S5 DRBM domain.

It belongs to the universal ribosomal protein uS5 family. As to quaternary structure, part of the 30S ribosomal subunit. Contacts proteins S4 and S8.

Functionally, with S4 and S12 plays an important role in translational accuracy. Its function is as follows. Located at the back of the 30S subunit body where it stabilizes the conformation of the head with respect to the body. The protein is Small ribosomal subunit protein uS5 of Wolinella succinogenes (strain ATCC 29543 / DSM 1740 / CCUG 13145 / JCM 31913 / LMG 7466 / NCTC 11488 / FDC 602W) (Vibrio succinogenes).